A 53-amino-acid chain; its full sequence is Rubredoxin (53 aa).

Positions 1–53 (MQKFECTLCGYIYDPALVGPDTPDQDGAFEDVSENWVCPLCGAGKEDFEVYED) constitute a Rubredoxin-like domain. The Fe cation site is built by C6, C9, C38, and C41.

Belongs to the rubredoxin family. Fe(3+) is required as a cofactor.

Its function is as follows. Rubredoxin is a small nonheme, iron protein lacking acid-labile sulfide. Its single Fe, chelated to 4 Cys, functions as an electron acceptor and may also stabilize the conformation of the molecule. The protein is Rubredoxin of Peptoniphilus asaccharolyticus (Peptostreptococcus asaccharolyticus).